Reading from the N-terminus, the 259-residue chain is 12alpha-hydroxysteroid dehydrogenase (259 aa).

The active-site Proton acceptor is Tyr-162.

This sequence belongs to the short-chain dehydrogenases/reductases (SDR) family. As to quaternary structure, homotetramer.

The catalysed reaction is cholate + NADP(+) = 3alpha,7alpha-dihydroxy-12-oxo-5beta-cholanate + NADPH + H(+). It carries out the reaction deoxycholate + NADP(+) = 12-dehydrodeoxycholate + NADPH + H(+). Catalyzes the oxidation of the 12alpha-hydroxy group of bile acids, like cholate and deoxycholate. Is also able to catalyze the reverse reaction in vitro. Is likely involved in an epimerization pathway of bile acids that converts hydroxy groups from alpha to beta positions via stable oxo-intermediates, which occurs in the human gut. The chain is 12alpha-hydroxysteroid dehydrogenase from Clostridium sp. (strain ATCC 29733 / VPI C48-50).